We begin with the raw amino-acid sequence, 122 residues long: Large ribosomal subunit protein uL14 (122 aa).

The protein belongs to the universal ribosomal protein uL14 family. Part of the 50S ribosomal subunit. Forms a cluster with proteins L3 and L19. In the 70S ribosome, L14 and L19 interact and together make contacts with the 16S rRNA in bridges B5 and B8.

Its function is as follows. Binds to 23S rRNA. Forms part of two intersubunit bridges in the 70S ribosome. This chain is Large ribosomal subunit protein uL14, found in Salinibacter ruber (strain DSM 13855 / M31).